The sequence spans 150 residues: 3-hydroxyacyl-[acyl-carrier-protein] dehydratase FabZ (150 aa).

H52 is an active-site residue.

It belongs to the thioester dehydratase family. FabZ subfamily.

Its subcellular location is the cytoplasm. The catalysed reaction is a (3R)-hydroxyacyl-[ACP] = a (2E)-enoyl-[ACP] + H2O. In terms of biological role, involved in unsaturated fatty acids biosynthesis. Catalyzes the dehydration of short chain beta-hydroxyacyl-ACPs and long chain saturated and unsaturated beta-hydroxyacyl-ACPs. The protein is 3-hydroxyacyl-[acyl-carrier-protein] dehydratase FabZ of Cupriavidus metallidurans (strain ATCC 43123 / DSM 2839 / NBRC 102507 / CH34) (Ralstonia metallidurans).